A 299-amino-acid polypeptide reads, in one-letter code: MDEAIRRFIEHLAVAGRSPHTLAAYRADIELLENMMQAKSARDATAAELRKALAKLHAQGLSSRSLARRLSSWRQFYHWLQRNGEREDNPAAGLYAPKRDKLLPKALPVDGTAALLDRIEGESELDARDRAIFELVYSCGLRLSETVALNLDDVDFSDSLLRIRGKGGKERLVPIGAEAMLRLRTWLGERSAGMDEPALFLGRHGHRLGGRQVEKRLRDWAIKTGAGQHVHPHMLRHSFASHMLQSSGDLRAVQELLGHANLSSTQIYTALDFQHLAKVYDGAHPRARKRGKPDDENKS.

A Core-binding (CB) domain is found at 1 to 81; sequence MDEAIRRFIE…SWRQFYHWLQ (81 aa). The Tyr recombinase domain occupies 102-281; it reads LLPKALPVDG…DFQHLAKVYD (180 aa). Catalysis depends on residues Arg142, Lys166, His233, Arg236, and His259. The O-(3'-phospho-DNA)-tyrosine intermediate role is filled by Tyr268.

It belongs to the 'phage' integrase family. XerC subfamily. Forms a cyclic heterotetrameric complex composed of two molecules of XerC and two molecules of XerD.

The protein localises to the cytoplasm. Functionally, site-specific tyrosine recombinase, which acts by catalyzing the cutting and rejoining of the recombining DNA molecules. The XerC-XerD complex is essential to convert dimers of the bacterial chromosome into monomers to permit their segregation at cell division. It also contributes to the segregational stability of plasmids. This is Tyrosine recombinase XerC from Chromobacterium violaceum (strain ATCC 12472 / DSM 30191 / JCM 1249 / CCUG 213 / NBRC 12614 / NCIMB 9131 / NCTC 9757 / MK).